A 409-amino-acid chain; its full sequence is Transcription termination factor 3, mitochondrial (409 aa).

The transit peptide at methionine 1 to serine 64 directs the protein to the mitochondrion. A disordered region spans residues arginine 74–isoleucine 93.

It belongs to the mTERF family.

The protein resides in the mitochondrion. Its function is as follows. Binds promoter DNA and regulates initiation of transcription. Required for normal mitochondrial transcription and translation, and for normal assembly of mitochondrial respiratory complexes. Required for normal mitochondrial function. Maintains 16S rRNA levels and functions in mitochondrial ribosome assembly by regulating the biogenesis of the 39S ribosomal subunit. The polypeptide is Transcription termination factor 3, mitochondrial (Mterf3) (Rattus norvegicus (Rat)).